We begin with the raw amino-acid sequence, 437 residues long: MNLAWNKILEEVSKKISPQYYERFIDTLKLETLNSEKCTIIAPSATIKTHVERKYQSIIENAILEACGDKIPVEILIETKATSPLQSFLEKSFDQKDFQFNPDYTFETFIVGDCNRLAYTAAKECVRKPAEINPLYLFGSVGVGKTHLLHAIGSELIKKDPWKTVCYIDISSFMNEFRFALQSRELIESFKIKYQSYNCLLVDDIQLLSTNAEKTQDEFFALFNFLFERKRQIVIASDRPSSELTIHERLKSRFVTGVQADIQYPNKEIRKGIVTSHSKIMDLGLSEDVLEFLADQIEEDTRLLLGALNDIYLYKKSYSLLFLNLDKVKEIVKNRLYRKKNVEFSHDRIIESVAKEFNLDAAEIMGKSRKKELIIPRHICFYLLHNVFNVNKSQVGRLFQTQHTTVIHGLRKTEELLSDNKEIRFLVERISSKYKLQ.

A domain I, interacts with DnaA modulators region spans residues 1 to 74; the sequence is MNLAWNKILE…EACGDKIPVE (74 aa). The interval 74–98 is domain II; that stretch reads EILIETKATSPLQSFLEKSFDQKDF. Residues 99 to 315 form a domain III, AAA+ region region; sequence QFNPDYTFET…GALNDIYLYK (217 aa). ATP-binding residues include glycine 142, glycine 144, lysine 145, and threonine 146. Residues 316–437 form a domain IV, binds dsDNA region; it reads KSYSLLFLNL…ERISSKYKLQ (122 aa).

Belongs to the DnaA family. Oligomerizes as a right-handed, spiral filament on DNA at oriC.

It localises to the cytoplasm. In terms of biological role, plays an essential role in the initiation and regulation of chromosomal replication. ATP-DnaA binds to the origin of replication (oriC) to initiate formation of the DNA replication initiation complex once per cell cycle. Binds the DnaA box (a 9 base pair repeat at the origin) and separates the double-stranded (ds)DNA. Forms a right-handed helical filament on oriC DNA; dsDNA binds to the exterior of the filament while single-stranded (ss)DNA is stabiized in the filament's interior. The ATP-DnaA-oriC complex binds and stabilizes one strand of the AT-rich DNA unwinding element (DUE), permitting loading of DNA polymerase. After initiation quickly degrades to an ADP-DnaA complex that is not apt for DNA replication. Binds acidic phospholipids. This chain is Chromosomal replication initiator protein DnaA, found in Leptospira borgpetersenii serovar Hardjo-bovis (strain JB197).